A 97-amino-acid polypeptide reads, in one-letter code: Large ribosomal subunit protein bL28 (97 aa).

Belongs to the bacterial ribosomal protein bL28 family.

The protein is Large ribosomal subunit protein bL28 of Bartonella quintana (strain Toulouse) (Rochalimaea quintana).